Reading from the N-terminus, the 545-residue chain is CTP synthase (545 aa).

Residues 1–266 (MATNYIFVTG…DTFVCDRFRL (266 aa)) are amidoligase domain. Position 14 (Ser-14) interacts with CTP. Ser-14 lines the UTP pocket. Residues 15-20 (SLGKGI) and Asp-72 each bind ATP. The Mg(2+) site is built by Asp-72 and Glu-140. Residues 147–149 (DIE), 187–192 (KTKPTQ), and Lys-223 contribute to the CTP site. UTP-binding positions include 187–192 (KTKPTQ) and Lys-223. 239–241 (KDV) serves as a coordination point for ATP. The 252-residue stretch at 291-542 (TIGMVGKYVE…VAAAKAYQDS (252 aa)) folds into the Glutamine amidotransferase type-1 domain. Gly-352 serves as a coordination point for L-glutamine. The active-site Nucleophile; for glutamine hydrolysis is the Cys-379. L-glutamine-binding positions include 380 to 383 (LGMQ), Glu-403, and Arg-470. Active-site residues include His-515 and Glu-517.

The protein belongs to the CTP synthase family. As to quaternary structure, homotetramer.

It catalyses the reaction UTP + L-glutamine + ATP + H2O = CTP + L-glutamate + ADP + phosphate + 2 H(+). The enzyme catalyses L-glutamine + H2O = L-glutamate + NH4(+). It carries out the reaction UTP + NH4(+) + ATP = CTP + ADP + phosphate + 2 H(+). Its pathway is pyrimidine metabolism; CTP biosynthesis via de novo pathway; CTP from UDP: step 2/2. With respect to regulation, allosterically activated by GTP, when glutamine is the substrate; GTP has no effect on the reaction when ammonia is the substrate. The allosteric effector GTP functions by stabilizing the protein conformation that binds the tetrahedral intermediate(s) formed during glutamine hydrolysis. Inhibited by the product CTP, via allosteric rather than competitive inhibition. In terms of biological role, catalyzes the ATP-dependent amination of UTP to CTP with either L-glutamine or ammonia as the source of nitrogen. Regulates intracellular CTP levels through interactions with the four ribonucleotide triphosphates. The polypeptide is CTP synthase (Actinobacillus pleuropneumoniae serotype 5b (strain L20)).